Consider the following 396-residue polypeptide: NAD(P)H oxidoreductase RTN4IP1, mitochondrial (396 aa).

A mitochondrion-targeting transit peptide spans 1-40 (MGVLKTCVLRRSACAAACFWRRTVIPKPPFRGISTTSARS). Residues 52 to 393 (GKNEVLRFTQ…RGHARGKTVV (342 aa)) enclose the Enoyl reductase (ER) domain. Positions 214, 216, 217, 237, 255, 276, 300, 341, 343, 386, 387, and 388 each coordinate NADPH.

This sequence belongs to the zinc-containing alcohol dehydrogenase family. Quinone oxidoreductase subfamily. As to quaternary structure, interacts with RTN4, UQCRC1 and UQCRC2. As to expression, widely expressed in mitochondria-enriched tissues. Found in heart, kidney, liver, brain and spinal cord.

The protein resides in the mitochondrion matrix. It localises to the mitochondrion outer membrane. The enzyme catalyses a 3-demethylubiquinone + NADH + 2 H(+) = a 3-demethylubiquinol + NAD(+). It carries out the reaction a 3-demethylubiquinone + NADPH + 2 H(+) = a 3-demethylubiquinol + NADP(+). The catalysed reaction is 3-demethylubiquinone-10 + NADH + 2 H(+) = 3-demethylubiquinol-10 + NAD(+). It catalyses the reaction 3-demethylubiquinone-10 + NADPH + 2 H(+) = 3-demethylubiquinol-10 + NADP(+). The protein operates within cofactor biosynthesis; ubiquinone biosynthesis. Its function is as follows. NAD(P)H oxidoreductase involved in the ubiquinone biosynthetic pathway. Required for the O-methyltransferase activity of COQ3. Able to catalyze the oxidoreduction of 3-demethylubiquinone into 3-demethylubiquinol in vitro. However, it is unclear if 3-demethylubiquinone constitutes a substrate in vivo. May also play a role in the regulation of retinal ganglion cell (RGC) neurite outgrowth, and hence in the development of the inner retina and optic nerve. Appears to be a potent inhibitor of regeneration following spinal cord injury. In Mus musculus (Mouse), this protein is NAD(P)H oxidoreductase RTN4IP1, mitochondrial.